Reading from the N-terminus, the 238-residue chain is 6-phosphogluconolactonase (238 aa).

This sequence belongs to the glucosamine/galactosamine-6-phosphate isomerase family. 6-phosphogluconolactonase subfamily.

The catalysed reaction is 6-phospho-D-glucono-1,5-lactone + H2O = 6-phospho-D-gluconate + H(+). It functions in the pathway carbohydrate degradation; pentose phosphate pathway; D-ribulose 5-phosphate from D-glucose 6-phosphate (oxidative stage): step 2/3. Functionally, hydrolysis of 6-phosphogluconolactone to 6-phosphogluconate. This is 6-phosphogluconolactonase (pgl) from Pseudomonas aeruginosa (strain ATCC 15692 / DSM 22644 / CIP 104116 / JCM 14847 / LMG 12228 / 1C / PRS 101 / PAO1).